A 539-amino-acid polypeptide reads, in one-letter code: Inositol 1,4,5-triphosphate receptor associated 2 (539 aa).

3 disordered regions span residues 1–21 (MLCVKGPPEQEPEDGALDVTR), 69–98 (YLTQPSSEQTSSSESTVTSSESGSDILHMA), and 147–171 (AGEELRTTENGGKGSAPGETEISMP). The Cytoplasmic portion of the chain corresponds to 1 to 479 (MLCVKGPPEQ…LQASFRRANR (479 aa)). Low complexity predominate over residues 74–92 (SSEQTSSSESTVTSSESGS). Threonine 78 carries the post-translational modification Phosphothreonine. Positions 298 to 326 (MIQHVENLKRMYAKEHAELEDLKQALLQN) form a coiled coil. The tract at residues 334–353 (PDEDDCQIKKRSSSLNSKPS) is disordered. Phosphoserine is present on residues serine 347, serine 354, and serine 408. Residues 418–449 (ERSDVKARDAPEPQGEEAVERTRKPSLSERRS) form a disordered region. Residues 435-449 (AVERTRKPSLSERRS) show a composition bias toward basic and acidic residues. A helical; Anchor for type IV membrane protein membrane pass occupies residues 480–500 (ALWLTGLIIILIAALMSFLTG). Residues 501–539 (QLFQTAVEAAPTQEGDSWLSLEHILWPFTRLGHDGPPPV) are Lumenal-facing.

The protein belongs to the IRAG2 family. In terms of assembly, interacts (via coiled-coil domain) with ITPR3. Interacts with SUN1 and SUN2. Interacts with microtubules. Interacts with HCN4; regulates HCN4 channel activity. The removal of the C-terminal lumenal domain occurs by proteolytic processing. In terms of tissue distribution, spleen and thymus. Expressed at high levels in pre B-cells, mature B-cells and pre T-cells. Expressed at low levels in mature T-cells and plasma B-cells. Expressed in circumvallate (CV), foliate (FL) and fungiform (FF) taste papillae cells of the tongue epithelium.

The protein resides in the cytoplasm. It is found in the endoplasmic reticulum membrane. The protein localises to the nucleus envelope. It localises to the cytoskeleton. Its subcellular location is the microtubule organizing center. The protein resides in the centrosome. It is found in the spindle pole. The protein localises to the chromosome. Its function is as follows. Plays a role in the delivery of peptides to major histocompatibility complex (MHC) class I molecules; this occurs in a transporter associated with antigen processing (TAP)-independent manner. May play a role in taste signal transduction via ITPR3. May play a role during fertilization in pronucleus congression and fusion. Plays a role in maintaining nuclear shape, maybe as a component of the LINC complex and through interaction with microtubules. Plays a role in the regulation of cellular excitability by regulating the hyperpolarization-activated cyclic nucleotide-gated HCN4 channel activity. The sequence is that of Inositol 1,4,5-triphosphate receptor associated 2 (Irag2) from Mus musculus (Mouse).